Consider the following 145-residue polypeptide: uncharacterized protein (145 aa).

The interval 37–123 (GKGTNTAKSS…MDREASYFAP (87 aa)) is disordered. Residues 38 to 63 (KGTNTAKSSGGNNGTNLNAKRSNTTQ) show a composition bias toward polar residues.

This is an uncharacterized protein from Caenorhabditis elegans.